Here is a 145-residue protein sequence, read N- to C-terminus: D-aminoacyl-tRNA deacylase (145 aa).

A Gly-cisPro motif, important for rejection of L-amino acids motif is present at residues 137-138 (GP).

It belongs to the DTD family. In terms of assembly, homodimer.

It is found in the cytoplasm. The enzyme catalyses glycyl-tRNA(Ala) + H2O = tRNA(Ala) + glycine + H(+). The catalysed reaction is a D-aminoacyl-tRNA + H2O = a tRNA + a D-alpha-amino acid + H(+). An aminoacyl-tRNA editing enzyme that deacylates mischarged D-aminoacyl-tRNAs. Also deacylates mischarged glycyl-tRNA(Ala), protecting cells against glycine mischarging by AlaRS. Acts via tRNA-based rather than protein-based catalysis; rejects L-amino acids rather than detecting D-amino acids in the active site. By recycling D-aminoacyl-tRNA to D-amino acids and free tRNA molecules, this enzyme counteracts the toxicity associated with the formation of D-aminoacyl-tRNA entities in vivo and helps enforce protein L-homochirality. This is D-aminoacyl-tRNA deacylase from Salmonella arizonae (strain ATCC BAA-731 / CDC346-86 / RSK2980).